The primary structure comprises 186 residues: Ribosome-recycling factor (186 aa).

The protein belongs to the RRF family.

Its subcellular location is the cytoplasm. Its function is as follows. Responsible for the release of ribosomes from messenger RNA at the termination of protein biosynthesis. May increase the efficiency of translation by recycling ribosomes from one round of translation to another. This Nitratiruptor sp. (strain SB155-2) protein is Ribosome-recycling factor.